The sequence spans 306 residues: MELVFLGTGAGVPSRGRNVTSIALSMLNERNTIWLFDCGEATQHQIMRSQIKLSKLEKIFITHMHGDHIFGLPGLLSSRSFQGGDSNLTIYGPAGIAEYVETSLRLSGTRLTYKINFEEIEPGVIFEDKMFIVTADDLDHGVRSFGYRIVEKDKQGALNAEKLKADGVEAGPVFQKLKNGEIVTLADGRVIDGKNYIGEPQKGKIISIFGDTRETSSELELALNADILVHEATFEGDKAKMAGEYMHSTTLQAAKLAKTANVKKLILTHISSRYDRDASKELLIEAKTIFENTEIAYDLAVFQVGE.

Positions 63, 65, 67, 68, 140, 211, and 269 each coordinate Zn(2+). Catalysis depends on Asp67, which acts as the Proton acceptor.

It belongs to the RNase Z family. Homodimer. Zn(2+) serves as cofactor.

It carries out the reaction Endonucleolytic cleavage of RNA, removing extra 3' nucleotides from tRNA precursor, generating 3' termini of tRNAs. A 3'-hydroxy group is left at the tRNA terminus and a 5'-phosphoryl group is left at the trailer molecule.. In terms of biological role, zinc phosphodiesterase, which displays some tRNA 3'-processing endonuclease activity. Probably involved in tRNA maturation, by removing a 3'-trailer from precursor tRNA. The chain is Ribonuclease Z from Listeria monocytogenes serovar 1/2a (strain ATCC BAA-679 / EGD-e).